The following is a 166-amino-acid chain: Flagellar protein LafL (166 aa).

The helical transmembrane segment at 6–26 threads the bilayer; it reads MIAMFIAMIITSALVSAATIM.

The protein belongs to the FliL family.

The protein resides in the cell inner membrane. In terms of biological role, controls the rotational direction of flagella during chemotaxis. This is Flagellar protein LafL (lafL) from Vibrio parahaemolyticus serotype O3:K6 (strain RIMD 2210633).